The sequence spans 252 residues: C-X-C motif chemokine 16 (252 aa).

Residues 1-25 form the signal peptide; that stretch reads MMLGRTSRLLLVLLFIAYATTSGNG. Topologically, residues 26-198 are extracellular; that stretch reads NEGSKVGSCP…RGPQAGTSAT (173 aa). Intrachain disulfides connect cysteine 34–cysteine 64 and cysteine 36–cysteine 78. Disordered stretches follow at residues 115–145 and 163–195; these read LPEPTEAAPSDTATTSQTYLPSTLQRTQQPT and TTTYTSGHSLGAEPEAKENQKQLKENRGPQAGT. Over residues 125–145 the composition is skewed to polar residues; the sequence is DTATTSQTYLPSTLQRTQQPT. The segment covering 176-189 has biased composition (basic and acidic residues); it reads PEAKENQKQLKENR. The helical transmembrane segment at 199 to 219 threads the bilayer; it reads VPVLSLLAIVFILAGVLLYVV. Over 220-252 the chain is Cytoplasmic; that stretch reads CKRRKNQLLQHPPDLAASLYTCSRRTRAENGTL.

This sequence belongs to the intercrine alpha (chemokine CxC) family. In terms of processing, glycosylated.

It localises to the membrane. In terms of biological role, induces a strong chemotactic response. Induces calcium mobilization. Binds to CXCR6/Bonzo. Also acts as a scavenger receptor on macrophages, which specifically binds to OxLDL (oxidized low density lipoprotein), suggesting that it may be involved in pathophysiology such as atherogenesis. The sequence is that of C-X-C motif chemokine 16 (CXCL16) from Bos taurus (Bovine).